Reading from the N-terminus, the 372-residue chain is Cytochrome b (372 aa).

Helical transmembrane passes span 25 to 45 (FGSMLLTCLAMQTLTGFFLAI), 69 to 90 (WTMQNLHAIGASMFFICIYIHI), 105 to 125 (WLSGITLLITLMATAFFGYVL), and 170 to 190 (FFALHFILPFIIISLTSIHII). Heme b-binding residues include H75 and H89. 2 residues coordinate heme b: H174 and H188. Residue H193 coordinates a ubiquinone. Transmembrane regions (helical) follow at residues 218–238 (YKDMLMVTTMITLLFLILSFS), 280–300 (LGGTLALLMSIAILMTTPFTH), 312–332 (LTQILFWTLVATFITLTWTAT), and 339–358 (FIIISQMTSIFYFFFFIMNP).

It belongs to the cytochrome b family. The cytochrome bc1 complex contains 3 respiratory subunits (MT-CYB, CYC1 and UQCRFS1), 2 core proteins (UQCRC1 and UQCRC2) and probably 6 low-molecular weight proteins. Heme b serves as cofactor.

It is found in the mitochondrion inner membrane. Its function is as follows. Component of the ubiquinol-cytochrome c reductase complex (complex III or cytochrome b-c1 complex) that is part of the mitochondrial respiratory chain. The b-c1 complex mediates electron transfer from ubiquinol to cytochrome c. Contributes to the generation of a proton gradient across the mitochondrial membrane that is then used for ATP synthesis. The polypeptide is Cytochrome b (MT-CYB) (Ophiophagus hannah (King cobra)).